The following is a 253-amino-acid chain: Phosphate import ATP-binding protein PstB (253 aa).

In terms of domain architecture, ABC transporter spans 5-248; that stretch reads IQVRDLNAYY…PSDKRTEDYI (244 aa). Residue 37 to 44 coordinates ATP; it reads GPSGCGKS.

It belongs to the ABC transporter superfamily. Phosphate importer (TC 3.A.1.7) family. The complex is composed of two ATP-binding proteins (PstB), two transmembrane proteins (PstC and PstA) and a solute-binding protein (PstS).

The protein localises to the cell inner membrane. It catalyses the reaction phosphate(out) + ATP + H2O = ADP + 2 phosphate(in) + H(+). Functionally, part of the ABC transporter complex PstSACB involved in phosphate import. Responsible for energy coupling to the transport system. The protein is Phosphate import ATP-binding protein PstB of Koribacter versatilis (strain Ellin345).